A 232-amino-acid chain; its full sequence is Clarin-2 (232 aa).

4 helical membrane passes run 8 to 28 (VWYG…IVAL), 101 to 121 (ILLL…FAIL), 139 to 159 (LWNV…MAAV), and 188 to 208 (SFWI…VVAI).

It belongs to the clarin family. Detected in inner ear, particularly in hair bundles of auditory hair cells and is enriched in apical stereocilia. Detected in eye, but not in brain or muscle.

It localises to the cell projection. Its subcellular location is the stereocilium membrane. In terms of biological role, plays a key role to hearing function. Required for normal organization and maintenance of the stereocilia bundle and for mechano-electrical transduction. In Mus musculus (Mouse), this protein is Clarin-2.